Consider the following 513-residue polypeptide: rRNA N(6)-adenosine-methyltransferase ZCCHC4 (513 aa).

Residues Cys40, His42, Cys64, Cys73, Cys125, Cys128, His140, and His143 each contribute to the Zn(2+) site. Residues 40–82 (CPHGPTLLFVKVTQGKEETRRFYACSACRDRKDCNFFQWEDEK) form a GRF-type zinc finger. S-adenosyl-L-methionine contacts are provided by residues 172–175 (QYLF), Arg202, Asp225, 243–244 (NM), and Asp276. Residues 337–357 (QVDYDNHALYKHGKTGRKQSP) form a regulatory loop region. The Zn(2+) site is built by Cys380, Cys383, His393, Cys394, Cys397, Cys400, His410, Cys411, Cys414, Cys417, His424, Cys425, Cys428, Cys431, His436, and Cys438. Positions 395–447 (ELCNSCTSKDGRKWNHCFLCKKCVKPSWIHCSICNHCAVPDHSCEGPKHGCFI) constitute a DHHC domain. The CCHC-type zinc finger occupies 443–460 (HGCFICGELDHKRSTCPN). Residues 466–481 (RANKAVRKQKQRKSNK) are compositionally biased toward basic residues. Residues 466 to 513 (RANKAVRKQKQRKSNKMKMETTKGQSMNHTSATRRKKRRERAHQYLGS) are disordered. Over residues 487-496 (TKGQSMNHTS) the composition is skewed to polar residues. Residues 497-506 (ATRRKKRRER) are compositionally biased toward basic residues.

It belongs to the ZCCHC4 family. Interacts with components of the ASC-1 complex TRIP4, ASCC1, ASCC2 and ASCC3. Interact with AHCYL1 and AHCYL2. Interact with YTHDC2.

It localises to the nucleus. Its subcellular location is the nucleolus. It is found in the cytoplasm. It carries out the reaction adenosine(4220) in 28S rRNA + S-adenosyl-L-methionine = N(6)-methyladenosine(4220) in 28S rRNA + S-adenosyl-L-homocysteine + H(+). In terms of biological role, rRNA N6-methyltransferase that specifically methylates the adenine in position 4220 of 28S rRNA. N6-methylation of adenine(4220) in 28S rRNA is required for translation. This Homo sapiens (Human) protein is rRNA N(6)-adenosine-methyltransferase ZCCHC4.